Reading from the N-terminus, the 833-residue chain is Leucine--tRNA ligase (833 aa).

The short motif at P41–H52 is the 'HIGH' region element. The 'KMSKS' region signature appears at K610–S614. ATP is bound at residue K613.

It belongs to the class-I aminoacyl-tRNA synthetase family.

The protein localises to the cytoplasm. It catalyses the reaction tRNA(Leu) + L-leucine + ATP = L-leucyl-tRNA(Leu) + AMP + diphosphate. The polypeptide is Leucine--tRNA ligase (Streptococcus agalactiae serotype Ia (strain ATCC 27591 / A909 / CDC SS700)).